The chain runs to 444 residues: GTPase Der (444 aa).

EngA-type G domains are found at residues 2–167 (LKVA…LKEI) and 173–349 (FKFC…ENLN). GTP-binding positions include 8–15 (GKPNVGKS), 55–59 (DTGGL), 118–121 (NKSE), 179–186 (GRPNVGKS), 226–230 (DTAGI), and 291–294 (NKWD). Residues 350–434 (LKFNSKILTD…PITLYFKNKT (85 aa)) enclose the KH-like domain.

This sequence belongs to the TRAFAC class TrmE-Era-EngA-EngB-Septin-like GTPase superfamily. EngA (Der) GTPase family. In terms of assembly, associates with the 50S ribosomal subunit.

GTPase that plays an essential role in the late steps of ribosome biogenesis. This Malacoplasma penetrans (strain HF-2) (Mycoplasma penetrans) protein is GTPase Der.